Reading from the N-terminus, the 312-residue chain is Ribosomal protein L11 methyltransferase (312 aa).

4 residues coordinate S-adenosyl-L-methionine: Thr160, Gly181, Asp203, and Asn248.

This sequence belongs to the methyltransferase superfamily. PrmA family.

It localises to the cytoplasm. The enzyme catalyses L-lysyl-[protein] + 3 S-adenosyl-L-methionine = N(6),N(6),N(6)-trimethyl-L-lysyl-[protein] + 3 S-adenosyl-L-homocysteine + 3 H(+). Its function is as follows. Methylates ribosomal protein L11. The chain is Ribosomal protein L11 methyltransferase from Fusobacterium nucleatum subsp. nucleatum (strain ATCC 25586 / DSM 15643 / BCRC 10681 / CIP 101130 / JCM 8532 / KCTC 2640 / LMG 13131 / VPI 4355).